Consider the following 357-residue polypeptide: Phospho-N-acetylmuramoyl-pentapeptide-transferase (357 aa).

Helical transmembrane passes span 4–24 (QILFSGVIGLFLTLVGTPLLI), 52–72 (TMGGIAFILATIIAYFMSKVI), 77–97 (PTFSGLLVLGLMAGMGLVGFL), 115–135 (AKMAGQLIVGIAFAVLALQFA), 153–173 (FGWTIGPVLFVIWALFMILAM), 186–206 (LATGAATMVFGAYTFIGVWQF), 228–248 (PLDLAVVASALMGACFGFLWW), 255–275 (IFMGDTGSLALGGALAGLAIC), 280–300 (LLVALLGGLFVLITMSVVIQV), and 334–354 (FWIIQGMCVIVGLGLFYAGWA).

Belongs to the glycosyltransferase 4 family. MraY subfamily. Requires Mg(2+) as cofactor.

Its subcellular location is the cell membrane. The enzyme catalyses UDP-N-acetyl-alpha-D-muramoyl-L-alanyl-gamma-D-glutamyl-meso-2,6-diaminopimeloyl-D-alanyl-D-alanine + di-trans,octa-cis-undecaprenyl phosphate = di-trans,octa-cis-undecaprenyl diphospho-N-acetyl-alpha-D-muramoyl-L-alanyl-D-glutamyl-meso-2,6-diaminopimeloyl-D-alanyl-D-alanine + UMP. Its pathway is cell wall biogenesis; peptidoglycan biosynthesis. Its function is as follows. Catalyzes the initial step of the lipid cycle reactions in the biosynthesis of the cell wall peptidoglycan: transfers peptidoglycan precursor phospho-MurNAc-pentapeptide from UDP-MurNAc-pentapeptide onto the lipid carrier undecaprenyl phosphate, yielding undecaprenyl-pyrophosphoryl-MurNAc-pentapeptide, known as lipid I. The sequence is that of Phospho-N-acetylmuramoyl-pentapeptide-transferase from Streptomyces avermitilis (strain ATCC 31267 / DSM 46492 / JCM 5070 / NBRC 14893 / NCIMB 12804 / NRRL 8165 / MA-4680).